A 278-amino-acid chain; its full sequence is Diaminopimelate epimerase (278 aa).

Substrate-binding residues include N13 and N66. C75 serves as the catalytic Proton donor. Residues 76-77 (GN), N162, N195, and 213-214 (ER) each bind substrate. The active-site Proton acceptor is C222. 223-224 (GT) serves as a coordination point for substrate.

It belongs to the diaminopimelate epimerase family. Homodimer.

The protein localises to the cytoplasm. The catalysed reaction is (2S,6S)-2,6-diaminopimelate = meso-2,6-diaminopimelate. Its pathway is amino-acid biosynthesis; L-lysine biosynthesis via DAP pathway; DL-2,6-diaminopimelate from LL-2,6-diaminopimelate: step 1/1. Functionally, catalyzes the stereoinversion of LL-2,6-diaminopimelate (L,L-DAP) to meso-diaminopimelate (meso-DAP), a precursor of L-lysine and an essential component of the bacterial peptidoglycan. This Trichodesmium erythraeum (strain IMS101) protein is Diaminopimelate epimerase.